Reading from the N-terminus, the 441-residue chain is ATP-dependent protease ATPase subunit HslU (441 aa).

Residues Ile-18, Gly-60–Glu-65, Asp-254, Glu-319, and Arg-391 contribute to the ATP site.

Belongs to the ClpX chaperone family. HslU subfamily. As to quaternary structure, a double ring-shaped homohexamer of HslV is capped on each side by a ring-shaped HslU homohexamer. The assembly of the HslU/HslV complex is dependent on binding of ATP.

The protein resides in the cytoplasm. Its function is as follows. ATPase subunit of a proteasome-like degradation complex; this subunit has chaperone activity. The binding of ATP and its subsequent hydrolysis by HslU are essential for unfolding of protein substrates subsequently hydrolyzed by HslV. HslU recognizes the N-terminal part of its protein substrates and unfolds these before they are guided to HslV for hydrolysis. The polypeptide is ATP-dependent protease ATPase subunit HslU (Shewanella piezotolerans (strain WP3 / JCM 13877)).